Consider the following 577-residue polypeptide: Arginine--tRNA ligase (577 aa).

The 'HIGH' region signature appears at 122–132 (PNVAKEMHVGH).

The protein belongs to the class-I aminoacyl-tRNA synthetase family. Monomer.

It localises to the cytoplasm. It carries out the reaction tRNA(Arg) + L-arginine + ATP = L-arginyl-tRNA(Arg) + AMP + diphosphate. This is Arginine--tRNA ligase from Escherichia coli O127:H6 (strain E2348/69 / EPEC).